The sequence spans 257 residues: NAD-capped RNA hydrolase NudC (257 aa).

Residue Arg-69 participates in substrate binding. Residues Cys-98 and Cys-101 each coordinate Zn(2+). Glu-111 provides a ligand contact to substrate. Residues Cys-116 and Cys-119 each contribute to the Zn(2+) site. Tyr-124 provides a ligand contact to substrate. A Nudix hydrolase domain is found at 125 to 248 (PQIAPCIIVA…TVARRLIEDT (124 aa)). A divalent metal cation contacts are provided by Ala-158, Glu-174, and Glu-178. Residues 159 to 180 (GFVEVGETLEQAVAREVMEESG) carry the Nudix box motif. 192–199 (QPWPFPQS) serves as a coordination point for substrate. Glu-219 provides a ligand contact to a divalent metal cation. Ala-241 lines the substrate pocket.

It belongs to the Nudix hydrolase family. NudC subfamily. As to quaternary structure, homodimer. Mg(2+) is required as a cofactor. The cofactor is Mn(2+). It depends on Zn(2+) as a cofactor.

It carries out the reaction a 5'-end NAD(+)-phospho-ribonucleoside in mRNA + H2O = a 5'-end phospho-adenosine-phospho-ribonucleoside in mRNA + beta-nicotinamide D-ribonucleotide + 2 H(+). The enzyme catalyses NAD(+) + H2O = beta-nicotinamide D-ribonucleotide + AMP + 2 H(+). The catalysed reaction is NADH + H2O = reduced beta-nicotinamide D-ribonucleotide + AMP + 2 H(+). Its function is as follows. mRNA decapping enzyme that specifically removes the nicotinamide adenine dinucleotide (NAD) cap from a subset of mRNAs by hydrolyzing the diphosphate linkage to produce nicotinamide mononucleotide (NMN) and 5' monophosphate mRNA. The NAD-cap is present at the 5'-end of some mRNAs and stabilizes RNA against 5'-processing. Has preference for mRNAs with a 5'-end purine. Catalyzes the hydrolysis of a broad range of dinucleotide pyrophosphates. The polypeptide is NAD-capped RNA hydrolase NudC (Salmonella dublin (strain CT_02021853)).